Reading from the N-terminus, the 426-residue chain is Glutamate-1-semialdehyde 2,1-aminomutase (426 aa).

Lys-265 is modified (N6-(pyridoxal phosphate)lysine).

The protein belongs to the class-III pyridoxal-phosphate-dependent aminotransferase family. HemL subfamily. In terms of assembly, homodimer. The cofactor is pyridoxal 5'-phosphate.

It localises to the cytoplasm. The catalysed reaction is (S)-4-amino-5-oxopentanoate = 5-aminolevulinate. The protein operates within porphyrin-containing compound metabolism; protoporphyrin-IX biosynthesis; 5-aminolevulinate from L-glutamyl-tRNA(Glu): step 2/2. In Yersinia enterocolitica serotype O:8 / biotype 1B (strain NCTC 13174 / 8081), this protein is Glutamate-1-semialdehyde 2,1-aminomutase.